The sequence spans 260 residues: Snake venom serine protease homolog KN4 (260 aa).

The N-terminal stretch at 1–18 is a signal peptide; the sequence is MVLIRVLANLLILQLSYA. Positions 19 to 24 are excised as a propeptide; sequence QKSSEL. In terms of domain architecture, Peptidase S1 spans 25–251; sequence IIGGDECNIN…HLDWIQNIIA (227 aa). Cystine bridges form between Cys31/Cys165, Cys52/Cys68, Cys100/Cys258, Cys144/Cys212, Cys176/Cys191, and Cys202/Cys227. Residues Asn83, Asn123, Asn124, Asn156, and Asn172 are each glycosylated (N-linked (GlcNAc...) asparagine). Asn253 carries an N-linked (GlcNAc...) asparagine glycan.

Belongs to the peptidase S1 family. Snake venom subfamily. Expressed by the venom gland.

Its subcellular location is the secreted. Functionally, snake venom serine protease homolog that may act in the hemostasis system of the prey. The polypeptide is Snake venom serine protease homolog KN4 (Trimeresurus stejnegeri (Chinese green tree viper)).